Reading from the N-terminus, the 219-residue chain is ATP synthase F(0) complex subunit a (219 aa).

The next 6 helical transmembrane spans lie at 4–24, 61–81, 90–110, 124–144, 172–192, and 194–214; these read PTYL…ILFP, WAAL…LGLL, QLSL…IIGM, EGTP…SLFI, FVLL…LFLL, and LLEI…LSLY.

The protein belongs to the ATPase A chain family. In terms of assembly, component of the ATP synthase complex composed at least of ATP5F1A/subunit alpha, ATP5F1B/subunit beta, ATP5MC1/subunit c (homooctomer), MT-ATP6/subunit a, MT-ATP8/subunit 8, ATP5ME/subunit e, ATP5MF/subunit f, ATP5MG/subunit g, ATP5MK/subunit k, ATP5MJ/subunit j, ATP5F1C/subunit gamma, ATP5F1D/subunit delta, ATP5F1E/subunit epsilon, ATP5PF/subunit F6, ATP5PB/subunit b, ATP5PD/subunit d, ATP5PO/subunit OSCP. ATP synthase complex consists of a soluble F(1) head domain (subunits alpha(3) and beta(3)) - the catalytic core - and a membrane F(0) domain - the membrane proton channel (subunits c, a, 8, e, f, g, k and j). These two domains are linked by a central stalk (subunits gamma, delta, and epsilon) rotating inside the F1 region and a stationary peripheral stalk (subunits F6, b, d, and OSCP). Interacts with DNAJC30; interaction is direct.

It localises to the mitochondrion inner membrane. It carries out the reaction H(+)(in) = H(+)(out). In terms of biological role, subunit a, of the mitochondrial membrane ATP synthase complex (F(1)F(0) ATP synthase or Complex V) that produces ATP from ADP in the presence of a proton gradient across the membrane which is generated by electron transport complexes of the respiratory chain. ATP synthase complex consist of a soluble F(1) head domain - the catalytic core - and a membrane F(1) domain - the membrane proton channel. These two domains are linked by a central stalk rotating inside the F(1) region and a stationary peripheral stalk. During catalysis, ATP synthesis in the catalytic domain of F(1) is coupled via a rotary mechanism of the central stalk subunits to proton translocation. With the subunit c (ATP5MC1), forms the proton-conducting channel in the F(0) domain, that contains two crucial half-channels (inlet and outlet) that facilitate proton movement from the mitochondrial intermembrane space (IMS) into the matrix. Protons are taken up via the inlet half-channel and released through the outlet half-channel, following a Grotthuss mechanism. This Oncorhynchus masou (Cherry salmon) protein is ATP synthase F(0) complex subunit a.